Consider the following 396-residue polypeptide: tRNA (guanine-N(7)-)-methyltransferase (396 aa).

Glu125, Glu150, and Asp177 together coordinate S-adenosyl-L-methionine. Positions 203 and 233 each coordinate substrate.

Belongs to the class I-like SAM-binding methyltransferase superfamily. TrmB family.

It carries out the reaction guanosine(46) in tRNA + S-adenosyl-L-methionine = N(7)-methylguanosine(46) in tRNA + S-adenosyl-L-homocysteine. The protein operates within tRNA modification; N(7)-methylguanine-tRNA biosynthesis. Catalyzes the formation of N(7)-methylguanine at position 46 (m7G46) in tRNA. The sequence is that of tRNA (guanine-N(7)-)-methyltransferase from Helicobacter hepaticus (strain ATCC 51449 / 3B1).